We begin with the raw amino-acid sequence, 441 residues long: COP9 signalosome complex subunit 2 (441 aa).

Over residues 1–23 the composition is skewed to acidic residues; that stretch reads DMEDDFMCDDEEDYDLEYSEDSN. The interval 1–29 is disordered; that stretch reads DMEDDFMCDDEEDYDLEYSEDSNSEPNVD. In terms of domain architecture, PCI spans 252-414; sequence AHTDFFEAFK…QLLELDHQKR (163 aa).

Belongs to the CSN2 family. In terms of assembly, component of the CSN complex, probably composed of cops1, cops2, cops3, cops4, cops5, cops6, cops7, cops8 and cops9.

Its subcellular location is the cytoplasm. It is found in the nucleus. Functionally, essential component of the COP9 signalosome complex (CSN), a complex involved in various cellular and developmental processes. The CSN complex is an essential regulator of the ubiquitin (Ubl) conjugation pathway by mediating the deneddylation of the cullin subunits of E3 ligase complexes, leading to modify the Ubl ligase activity. In Xenopus laevis (African clawed frog), this protein is COP9 signalosome complex subunit 2 (csn2).